A 711-amino-acid polypeptide reads, in one-letter code: MSKNLVVIESPNKVKTLQKYLPNDFEIVSTIGHIREMVHKNFGFNEADYSPVWEDWTKSKKKFSSLSFKGNLKGKKLLSKYDIIKSIKEKASKATNIYLATDPDREGEAISWHVYDVLDEKDKSKCQRITFNEITKNAVLDALKNPREIDQSWVQSQFARQILDRMIGFRLSRLLNNYLSAKSAGRVQSVALRFLEEREQEIRSFVPRFWWTLDVLLNPKAEGVREACANRSIPIVLREINPALRAGLKFEEEKSVSGIDFLDEASAKKFGEQLKGVFEVYNIDETKHYSSSPNSAYTTASLQKDAINKLGWSSKKVTLIAQHLYEGVSINGEQTALISYPRTDSTRLSAQFQQSCKEYILNHYGEKYLSNRIVSAKGKKGEKIIQDAHEAIHPTDINITPEMVKNAIKKDEFLLYRLIWIRTVASLMADCKKSHTHIRFINDGNKFYASSKSLVFDGYRKIYEHFENKESNDLYIDLDKIRVGDRFMAKDIKITARQTHPAARYTQASLIEALEKSNIGRPSTYNTMASVNLDRGYASLNKHAFHVTQLGEQVNEELSKHFGKIINKEFTKNMEKSLDEIAENKKNYQEFLRDFWSNFKEEVKLAEGSIQRVKKEKEFVGRDCPSCASPLLYRYTKRGNEKFVGCSNFPNCKYNEFSQNKPNLTLEKLEELCPECNSQLVKRRTKFNPNKTFVGCSNFPRCRYIKKDNAS.

The Toprim domain occupies 3-134; sequence KNLVVIESPN…KCQRITFNEI (132 aa). Mg(2+) is bound by residues E9 and D102. The Topo IA-type catalytic domain occupies 150–604; it reads DQSWVQSQFA…FWSNFKEEVK (455 aa). Residues 183-188 are interaction with DNA; sequence SAGRVQ. Catalysis depends on Y340, which acts as the O-(5'-phospho-DNA)-tyrosine intermediate. C4-type zinc fingers lie at residues 624 to 652 and 673 to 702; these read CPSCASPLLYRYTKRGNEKFVGCSNFPNC and CPECNSQLVKRRTKFNPNKTFVGCSNFPRC.

It belongs to the type IA topoisomerase family. Monomer. Requires Mg(2+) as cofactor.

The enzyme catalyses ATP-independent breakage of single-stranded DNA, followed by passage and rejoining.. Its function is as follows. Releases the supercoiling and torsional tension of DNA, which is introduced during the DNA replication and transcription, by transiently cleaving and rejoining one strand of the DNA duplex. Introduces a single-strand break via transesterification at a target site in duplex DNA. The scissile phosphodiester is attacked by the catalytic tyrosine of the enzyme, resulting in the formation of a DNA-(5'-phosphotyrosyl)-enzyme intermediate and the expulsion of a 3'-OH DNA strand. The free DNA strand then undergoes passage around the unbroken strand, thus removing DNA supercoils. Finally, in the religation step, the DNA 3'-OH attacks the covalent intermediate to expel the active-site tyrosine and restore the DNA phosphodiester backbone. This chain is DNA topoisomerase 1, found in Mycoplasma pneumoniae (strain ATCC 29342 / M129 / Subtype 1) (Mycoplasmoides pneumoniae).